Reading from the N-terminus, the 159-residue chain is MTKTVIYPGTFDPITYGHLDIIERSAVLFPQVLVAVASNPTKKPLFELAERVRLAEESVAHLPNVQVIGFSDLLANVVKERHITAIIRGMRTTMDFEYELQLAHLNRALTDGVESLFLPSTEKWSYVSSTIVREIYLHRGDVSQFVPPPVLTALMEKNR.

A substrate-binding site is contributed by Thr10. ATP contacts are provided by residues 10–11 (TF) and His18. Residues Lys42, Leu74, and Arg88 each coordinate substrate. ATP-binding positions include 89-91 (GMR), Glu99, and 124-130 (WSYVSST).

The protein belongs to the bacterial CoaD family. As to quaternary structure, homohexamer. Requires Mg(2+) as cofactor.

It localises to the cytoplasm. The catalysed reaction is (R)-4'-phosphopantetheine + ATP + H(+) = 3'-dephospho-CoA + diphosphate. It participates in cofactor biosynthesis; coenzyme A biosynthesis; CoA from (R)-pantothenate: step 4/5. Its function is as follows. Reversibly transfers an adenylyl group from ATP to 4'-phosphopantetheine, yielding dephospho-CoA (dPCoA) and pyrophosphate. The chain is Phosphopantetheine adenylyltransferase from Mannheimia succiniciproducens (strain KCTC 0769BP / MBEL55E).